An 805-amino-acid chain; its full sequence is Phenylalanine--tRNA ligase beta subunit (805 aa).

The tRNA-binding domain occupies 39–148 (APPFTGVVVA…AALRPGTDIR (110 aa)). A B5 domain is found at 399–474 (PVREPVRMRL…RVYGFERIPD (76 aa)). Mg(2+)-binding residues include Asp-452, Asp-458, Glu-461, and Glu-462. An FDX-ACB domain is found at 703–804 (SRQPAVVRDL…LVAAHNARQR (102 aa)).

This sequence belongs to the phenylalanyl-tRNA synthetase beta subunit family. Type 1 subfamily. In terms of assembly, tetramer of two alpha and two beta subunits. It depends on Mg(2+) as a cofactor.

The protein resides in the cytoplasm. The enzyme catalyses tRNA(Phe) + L-phenylalanine + ATP = L-phenylalanyl-tRNA(Phe) + AMP + diphosphate + H(+). The polypeptide is Phenylalanine--tRNA ligase beta subunit (Bordetella parapertussis (strain 12822 / ATCC BAA-587 / NCTC 13253)).